Reading from the N-terminus, the 156-residue chain is Snaclec A15 (156 aa).

A signal peptide spans 1–23 (MGRFIFVRFGLLVVFLSLSGTGA). 3 cysteine pairs are disulfide-bonded: Cys-27/Cys-38, Cys-55/Cys-152, and Cys-127/Cys-144. The region spanning 34–153 (YDQHCYKAFD…CGDDYPFVCK (120 aa)) is the C-type lectin domain. Asn-141 is a glycosylation site (N-linked (GlcNAc...) asparagine).

Belongs to the snaclec family. In terms of assembly, heterodimer; disulfide-linked. In terms of tissue distribution, expressed by the venom gland.

It is found in the secreted. Its function is as follows. Interferes with one step of hemostasis (modulation of platelet aggregation, or coagulation cascade, for example). This Macrovipera lebetinus (Levantine viper) protein is Snaclec A15.